Reading from the N-terminus, the 800-residue chain is Phenylalanine--tRNA ligase beta subunit (800 aa).

The tRNA-binding domain occupies 39-148 (TAALAPFVVG…ADTPVGVPLV (110 aa)). Residues 402-478 (VWRRTIALRP…RLHGFDLVPA (77 aa)) form the B5 domain. Mg(2+) is bound by residues Asp456, Asp462, Glu465, and Glu466. The FDX-ACB domain occupies 706–799 (SPFQPVARDF…VTKLTGGSLR (94 aa)).

The protein belongs to the phenylalanyl-tRNA synthetase beta subunit family. Type 1 subfamily. In terms of assembly, tetramer of two alpha and two beta subunits. Requires Mg(2+) as cofactor.

Its subcellular location is the cytoplasm. The catalysed reaction is tRNA(Phe) + L-phenylalanine + ATP = L-phenylalanyl-tRNA(Phe) + AMP + diphosphate + H(+). This chain is Phenylalanine--tRNA ligase beta subunit, found in Rhodospirillum rubrum (strain ATCC 11170 / ATH 1.1.1 / DSM 467 / LMG 4362 / NCIMB 8255 / S1).